A 128-amino-acid polypeptide reads, in one-letter code: Large ribosomal subunit protein bL12 (128 aa).

This sequence belongs to the bacterial ribosomal protein bL12 family. Homodimer. Part of the ribosomal stalk of the 50S ribosomal subunit. Forms a multimeric L10(L12)X complex, where L10 forms an elongated spine to which 2 to 4 L12 dimers bind in a sequential fashion. Binds GTP-bound translation factors.

Forms part of the ribosomal stalk which helps the ribosome interact with GTP-bound translation factors. Is thus essential for accurate translation. The polypeptide is Large ribosomal subunit protein bL12 (Desulfovibrio desulfuricans (strain ATCC 27774 / DSM 6949 / MB)).